The following is a 468-amino-acid chain: Sorting and assembly machinery component 50 homolog B (468 aa).

The segment at 1–25 is disordered; the sequence is MGTVHARSLDPLPMNGPDFGSPDDA. In terms of domain architecture, POTRA spans 44–124; that stretch reads VVVQRVHFEG…LDVTFEVTEL (81 aa).

The protein belongs to the SAM50/omp85 family. As to quaternary structure, associates with the mitochondrial contact site and cristae organizing system (MICOS) complex (also known as MINOS or MitOS complex).

The protein localises to the mitochondrion outer membrane. Its function is as follows. May play a role in the maintenance of the structure of mitochondrial cristae. The chain is Sorting and assembly machinery component 50 homolog B (samm50-b) from Xenopus laevis (African clawed frog).